The sequence spans 720 residues: F-box/LRR-repeat MAX2 homolog (720 aa).

In terms of domain architecture, F-box spans 14–60 (SSAILDLPEPLLLHILSFLTDVRSRHRAALACGRMRAAERATRSELS). 18 LRR repeats span residues 71 to 134 (LFLS…QNAF), 135 to 158 (IAARLAGCFPAVTSLAVYCRDPTT), 159 to 189 (LANLTPHWQASLRRVKLVRWHQRPPTLPDGA), 190 to 218 (DLEPLLETCAALRELDLSEFYCWTEDVVR), 219 to 247 (ALTTHPSATAALTHLDLGLAAATDGFKSS), 248 to 279 (ELGPIAASCPNLRKLVAPCLFNPRFSDCVGDD), 280 to 316 (ALLSLATSCPRLTVLRLSEPFEAAANIQREEAAITVA), 317 to 344 (GLVAFFAALPALEDFTMDLQHNVLEAAP), 345 to 372 (AMEALARRCPRIKFLTLGSFQGLCKASW), 373 to 398 (LHLDGVAVCGGLESLYMKNCQDLTDA), 399 to 435 (SLAAIGRGCRRLAKFGIHGCDLVTSAGIRRLAFTLRP), 436 to 452 (TLKEVTVLHCRLLHTAE), 453 to 510 (CLTA…KCRY), 511 to 537 (MEFDDLGSWEMLRSLSLWFSAGQLLSP), 538 to 571 (LISAGLDSCPVLEEISIKVEGDCRTCPRPAPRTI), 572 to 606 (FGLSDLAGFPVLAKMKLDLSEAVGYALTAPTGQMD), 607 to 644 (LSLWERFYLHGIESLQTLYELDYWPPQDKDVHHRSLTL), and 645 to 720 (PAVG…QIDD).

As to quaternary structure, associates to a SCF (SKP1-CUL1-F-box protein) E3 ubiquitin-protein ligase complex. Interacts with D14 in a strigolactone-dependent manner. Interacts with SKP1, SKP5 and SKP20. In terms of tissue distribution, expressed in leaves. Expressed in roots, culms, leaf blades, leaf sheaths, shoot bases and panicles.

It is found in the nucleus. In terms of biological role, involved in strigolactone (SL) signaling. Required for responses to SLs and the establishment of arbuscular mycorrhiza symbiosis in rice. Strigolactone-dependent association of D3 with D14 and D53 (a repressor of SL signaling) triggers D53 ubiquitination and degradation. Controls tillering by suppressing axillary bud activity. Tiller is a specialized grain-bearing branch that is formed on the unelongated basal internode and grows independently of the mother stem (culm) by means of its own adventitious roots. The protein is F-box/LRR-repeat MAX2 homolog of Oryza sativa subsp. japonica (Rice).